Here is an 89-residue protein sequence, read N- to C-terminus: Luqin-like RYamide peptides lury-1 (89 aa).

An N-terminal signal peptide occupies residues M1–C19. Positions Q20 to E26 are excised as a propeptide. Tyrosine amide is present on residues Y35 and Y43. Residues S47–L89 constitute a propeptide that is removed on maturation.

In terms of tissue distribution, expressed in the M1 and M2 pharyngeal neurons from where the LURY-1-1 and LURY-1-2 peptides are secreted.

Its subcellular location is the secreted. Functionally, acts as a ligand for the npr-22 receptor and controls food-related processes including feeding, lifespan, egg-laying and roaming behavior. Secreted in the presence of food, leading to reduced feeding and roaming behavior and increased egg laying and lifespan. Activity may be latent under normal conditions but induced under conditions that cause hyperactivation of the pharynx such as abrupt refeeding after starvation. The sequence is that of Luqin-like RYamide peptides lury-1 from Caenorhabditis elegans.